The chain runs to 252 residues: Cilia- and flagella-associated protein 300 (252 aa).

It belongs to the CFAP300 family.

It is found in the cytoplasm. It localises to the cytoskeleton. The protein localises to the cilium axoneme. Functionally, cilium- and flagellum-specific protein that plays a role in axonemal structure organization and motility. Plays a role in outer and inner axonemal dynein arm assembly. The polypeptide is Cilia- and flagella-associated protein 300 (Paramecium tetraurelia).